A 1636-amino-acid chain; its full sequence is Tyrosine-protein phosphatase non-receptor type 23 (1636 aa).

Positions 8–394 constitute a BRO1 domain; that stretch reads PMIWLDLKEA…AKIEDKNEVL (387 aa). TPR repeat units follow at residues 250–283 and 374–407; these read AVAH…LNEA and EEKA…DPET. Positions 550-623 form a coiled coil; the sequence is KAVLQNLKRI…VYLEQNLAAQ (74 aa). The segment covering 701-714 has biased composition (basic and acidic residues); sequence EAARQQLLDRELKK. Disordered regions lie at residues 701-812 and 888-1151; these read EAAR…GPHA and QAPI…AAEG. The residue at position 733 (serine 733) is a Phosphoserine. The his stretch occupies residues 770-1130; that stretch reads HFPPSPFPSS…SSSPESQHGG (361 aa). Pro residues-rich tracts occupy residues 898-922 and 950-962; these read RPNP…PTPY and RIGP…PQPH. Residue arginine 950 is modified to Omega-N-methylarginine. 6 tandem repeats follow at residues 953–954, 955–956, 957–958, 959–960, 961–962, and 963–964. A 6 X 2 AA approximate tandem repeats of P-Q region spans residues 953-964; the sequence is PQPQPHPQPHPS. Pro residues-rich tracts occupy residues 983-1002, 1036-1050, and 1083-1109; these read LFPP…PYAP, FPSP…PPLA, and HLVP…PPPC. A compositionally biased stretch (polar residues) spans 1120–1131; that stretch reads LSSSPESQHGGT. 2 positions are modified to phosphoserine: serine 1122 and serine 1123. Threonine 1131 carries the phosphothreonine modification. Residues 1192–1452 form the Tyrosine-protein phosphatase domain; sequence DTVWRELQDA…RFCYEAVVRH (261 aa). The Phosphocysteine intermediate role is filled by cysteine 1392. The disordered stretch occupies residues 1513–1636; sequence LESPVASLPG…LDPLWTLNKT (124 aa). Composition is skewed to pro residues over residues 1523–1533 and 1542–1556; these read PAEPPGLPPAS and SSSP…PEAP. Positions 1567 to 1587 are enriched in low complexity; sequence APSSGPPSSSLELLASLTPEA. Omega-N-methylarginine is present on arginine 1615.

This sequence belongs to the protein-tyrosine phosphatase family. Non-receptor class subfamily. As to quaternary structure, interacts with GRAP2 and GRB2. Interacts with UBAP1. Interacts with CHMP4B.

It localises to the nucleus. The protein resides in the cytoplasm. The protein localises to the cytoplasmic vesicle. Its subcellular location is the endosome. It is found in the cytoskeleton. It localises to the cilium basal body. The protein resides in the early endosome. The enzyme catalyses O-phospho-L-tyrosyl-[protein] + H2O = L-tyrosyl-[protein] + phosphate. Its function is as follows. Plays a role in sorting of endocytic ubiquitinated cargos into multivesicular bodies (MVBs) via its interaction with the ESCRT-I complex (endosomal sorting complex required for transport I), and possibly also other ESCRT complexes. May act as a negative regulator of Ras-mediated mitogenic activity. Plays a role in ciliogenesis. This is Tyrosine-protein phosphatase non-receptor type 23 (PTPN23) from Homo sapiens (Human).